An 83-amino-acid chain; its full sequence is Erabutoxin c (83 aa).

An N-terminal signal peptide occupies residues 1–21; it reads MKTLLLTLVVVTIVCLDLGYT. Residues 24 to 38 form a loop I region; the sequence is CFNHQSSQPQTTKTC. 4 disulfides stabilise this stretch: C24-C45, C38-C62, C64-C75, and C76-C81. A stretch between loop I and loop II region spans residues 39-44; that stretch reads SPGESS. Residues 45–62 form a loop II region; it reads CYHKQWSDFRGTIIERGC. The loop III stretch occupies residues 64–75; it reads CPTVKPGINLSC.

Belongs to the three-finger toxin family. Short-chain subfamily. Type I alpha-neurotoxin sub-subfamily. As to expression, expressed by the venom gland.

It is found in the secreted. Its function is as follows. Binds to muscle nicotinic acetylcholine receptor (nAChR) and inhibit acetylcholine from binding to the receptor, thereby impairing neuromuscular transmission. Binds to Torpedo marmorata nAChR (Kd=0.14 nM). The sequence is that of Erabutoxin c from Laticauda semifasciata (Black-banded sea krait).